The chain runs to 287 residues: Bifunctional protein FolD (287 aa).

NADP(+)-binding positions include 171–173 (GHS), Ile-196, and Ile-237.

This sequence belongs to the tetrahydrofolate dehydrogenase/cyclohydrolase family. In terms of assembly, homodimer.

It carries out the reaction (6R)-5,10-methylene-5,6,7,8-tetrahydrofolate + NADP(+) = (6R)-5,10-methenyltetrahydrofolate + NADPH. The enzyme catalyses (6R)-5,10-methenyltetrahydrofolate + H2O = (6R)-10-formyltetrahydrofolate + H(+). It participates in one-carbon metabolism; tetrahydrofolate interconversion. Functionally, catalyzes the oxidation of 5,10-methylenetetrahydrofolate to 5,10-methenyltetrahydrofolate and then the hydrolysis of 5,10-methenyltetrahydrofolate to 10-formyltetrahydrofolate. The protein is Bifunctional protein FolD of Methanosarcina mazei (strain ATCC BAA-159 / DSM 3647 / Goe1 / Go1 / JCM 11833 / OCM 88) (Methanosarcina frisia).